The primary structure comprises 338 residues: Heat-inducible transcription repressor HrcA (338 aa).

Belongs to the HrcA family.

Functionally, negative regulator of class I heat shock genes (grpE-dnaK-dnaJ and groELS operons). Prevents heat-shock induction of these operons. The protein is Heat-inducible transcription repressor HrcA of Bacillus cereus (strain ATCC 10987 / NRS 248).